Here is a 1612-residue protein sequence, read N- to C-terminus: DNA topoisomerase 2-beta (1612 aa).

The residue at position 2 (Ala2) is an N-acetylalanine. Lys3 carries the post-translational modification N6-acetyllysine. Glycyl lysine isopeptide (Lys-Gly) (interchain with G-Cter in SUMO2) cross-links involve residues Lys21 and Lys22. Residues Asn100, Asn129, and 157-159 contribute to the ATP site; that span reads SSN. Residues Lys165 and Lys166 each participate in a glycyl lysine isopeptide (Lys-Gly) (interchain with G-Cter in SUMO2) cross-link. 170–177 serves as a coordination point for ATP; the sequence is GRNGYGAK. Residues Lys216 and Lys287 each participate in a glycyl lysine isopeptide (Lys-Gly) (interchain with G-Cter in SUMO2) cross-link. The segment at 351 to 353 is interaction with DNA; the sequence is KKK. Residues Lys355 and Lys361 each participate in a glycyl lysine isopeptide (Lys-Gly) (interchain with G-Cter in SUMO2) cross-link. 385–387 lines the ATP pocket; it reads QTK. Glycyl lysine isopeptide (Lys-Gly) (interchain with G-Cter in SUMO2) cross-links involve residues Lys425, Lys427, and Lys434. The Toprim domain occupies 464 to 581; sequence CTLILTEGDS…SLLKHGFLEE (118 aa). Residues Glu470, Asp550, and Asp552 each contribute to the Mg(2+) site. Glycyl lysine isopeptide (Lys-Gly) (interchain with G-Cter in SUMO2) cross-links involve residues Lys588, Lys593, Lys623, Lys631, Lys634, Lys664, and Lys700. The Topo IIA-type catalytic domain maps to 724–1177; the sequence is IPSLVDGFKP…SPSDLWKEDL (454 aa). Tyr814 functions as the O-(5'-phospho-DNA)-tyrosine intermediate in the catalytic mechanism. Residues 999–1008 are interaction with DNA; it reads KLQTTLTCNS. A Glycyl lysine isopeptide (Lys-Gly) (interchain with G-Cter in SUMO2) cross-link involves residue Lys1080. The interval 1098 to 1128 is disordered; sequence AWKEAQEKAAEEEDTQNQHDDSSSDSGTPSG. Residues Lys1202, Lys1205, Lys1214, and Lys1215 each participate in a glycyl lysine isopeptide (Lys-Gly) (interchain with G-Cter in SUMO2) cross-link. Ser1224 carries the post-translational modification Phosphoserine. Glycyl lysine isopeptide (Lys-Gly) (interchain with G-Cter in SUMO2) cross-links involve residues Lys1238, Lys1250, and Lys1259. Positions 1245-1586 are disordered; the sequence is LLKKKKGDPD…FTSEPPALPR (342 aa). The residue at position 1280 (Thr1280) is a Phosphothreonine. Residues Lys1311 and Lys1315 each participate in a glycyl lysine isopeptide (Lys-Gly) (interchain with G-Cter in SUMO2) cross-link. Composition is skewed to basic and acidic residues over residues 1322–1332 and 1346–1358; these read PWSDDESKSES and SLLR…RPKY. Phosphoserine is present on residues Ser1324, Ser1328, Ser1330, Ser1332, and Ser1346. Phosphotyrosine is present on Tyr1358. The segment covering 1362–1379 has biased composition (acidic residues); the sequence is FSEEEEEDADDDDDNNDL. At Ser1363 the chain carries Phosphoserine. Lys1385 participates in a covalent cross-link: Glycyl lysine isopeptide (Lys-Gly) (interchain with G-Cter in SUMO2). Ser1387 is subject to Phosphoserine. A Phosphothreonine modification is found at Thr1390. The residue at position 1400 (Ser1400) is a Phosphoserine. Tyr1408 carries the post-translational modification Phosphotyrosine. The residue at position 1411 (Ser1411) is a Phosphoserine. The span at 1417–1429 shows a compositional bias: basic and acidic residues; the sequence is ATPEKSSHDKKSQ. Lys1427 is covalently cross-linked (Glycyl lysine isopeptide (Lys-Gly) (interchain with G-Cter in SUMO2)). Residues Ser1428, Ser1439, and Ser1441 each carry the phosphoserine modification. Residue Lys1443 forms a Glycyl lysine isopeptide (Lys-Gly) (interchain with G-Cter in SUMO2) linkage. A compositionally biased stretch (basic and acidic residues) spans 1443–1453; sequence KSEDDSAKFDS. Phosphoserine is present on residues Ser1448, Ser1453, and Ser1460. Lys1477 participates in a covalent cross-link: Glycyl lysine isopeptide (Lys-Gly) (interchain with G-Cter in SUMO2). The interaction with PLSCR1 stretch occupies residues 1493 to 1499; sequence KAKRAPK. Ser1509, Ser1511, and Ser1513 each carry phosphoserine. The segment covering 1526-1536 has biased composition (basic residues); it reads GKGRGAKKRKA. A phosphoserine mark is found at Ser1537 and Ser1539. Residues 1550-1561 show a composition bias toward basic residues; that stretch reads KPSKTASKKPKK. Position 1562 is a phosphothreonine (Thr1562). 2 positions are modified to phosphoserine: Ser1563 and Ser1568. Residue Tyr1596 is modified to Phosphotyrosine. Residue Ser1600 is modified to Phosphoserine.

It belongs to the type II topoisomerase family. As to quaternary structure, homodimer. Interacts with PLSCR1 and KIAA1210. It depends on Mg(2+) as a cofactor. Mn(2+) is required as a cofactor. Requires Ca(2+) as cofactor.

Its subcellular location is the nucleus. It localises to the nucleolus. The protein localises to the nucleoplasm. It catalyses the reaction ATP-dependent breakage, passage and rejoining of double-stranded DNA.. Key decatenating enzyme that alters DNA topology by binding to two double-stranded DNA molecules, generating a double-stranded break in one of the strands, passing the intact strand through the broken strand, and religating the broken strand. The protein is DNA topoisomerase 2-beta (TOP2B) of Cricetulus longicaudatus (Long-tailed dwarf hamster).